Here is a 367-residue protein sequence, read N- to C-terminus: Homoserine O-acetyltransferase (367 aa).

Residues 44–350 (NAILVTHAWT…AYGHDAFLLE (307 aa)) form the AB hydrolase-1 domain. Catalysis depends on S150, which acts as the Nucleophile. R217 lines the substrate pocket. Residues D311 and H344 contribute to the active site. D345 serves as a coordination point for substrate.

The protein belongs to the AB hydrolase superfamily. MetX family. As to quaternary structure, homodimer.

The protein resides in the cytoplasm. It catalyses the reaction L-homoserine + acetyl-CoA = O-acetyl-L-homoserine + CoA. The protein operates within amino-acid biosynthesis; L-methionine biosynthesis via de novo pathway; O-acetyl-L-homoserine from L-homoserine: step 1/1. In terms of biological role, transfers an acetyl group from acetyl-CoA to L-homoserine, forming acetyl-L-homoserine. This Citrifermentans bemidjiense (strain ATCC BAA-1014 / DSM 16622 / JCM 12645 / Bem) (Geobacter bemidjiensis) protein is Homoserine O-acetyltransferase.